The sequence spans 389 residues: BTB/POZ domain-containing protein KCTD9 (389 aa).

Residues 3-82 (RVTLFLNGSP…PQTDSKPPEG (80 aa)) enclose the KHA domain. Ser-11 bears the Phosphoserine mark. Residues 89–161 (DWLTLNVGGR…LRHGQLIVND (73 aa)) form the BTB domain. Pentapeptide repeat domains follow at residues 224–256 (NFSG…ANLC), 258–297 (ANLE…NFED), and 338–376 (CNLR…AIFE).

As to quaternary structure, forms pentamers. Component of a complex composed of 5 subunits of KCTD9 and 5 CUL3.

Its pathway is protein modification; protein ubiquitination. Substrate-specific adapter of a BCR (BTB-CUL3-RBX1) E3 ubiquitin-protein ligase complex, which mediates the ubiquitination of target proteins, leading to their degradation by the proteasome. This is BTB/POZ domain-containing protein KCTD9 (KCTD9) from Homo sapiens (Human).